A 125-amino-acid polypeptide reads, in one-letter code: Translation initiation factor 5A (125 aa).

Residue K36 is modified to Hypusine.

The protein belongs to the eIF-5A family.

The protein localises to the cytoplasm. Its function is as follows. Functions by promoting the formation of the first peptide bond. This chain is Translation initiation factor 5A (eIF5A), found in Halorubrum lacusprofundi (strain ATCC 49239 / DSM 5036 / JCM 8891 / ACAM 34).